Consider the following 432-residue polypeptide: Gamma-glutamyl phosphate reductase (432 aa).

It belongs to the gamma-glutamyl phosphate reductase family.

Its subcellular location is the cytoplasm. The catalysed reaction is L-glutamate 5-semialdehyde + phosphate + NADP(+) = L-glutamyl 5-phosphate + NADPH + H(+). It participates in amino-acid biosynthesis; L-proline biosynthesis; L-glutamate 5-semialdehyde from L-glutamate: step 2/2. Functionally, catalyzes the NADPH-dependent reduction of L-glutamate 5-phosphate into L-glutamate 5-semialdehyde and phosphate. The product spontaneously undergoes cyclization to form 1-pyrroline-5-carboxylate. In Psychrobacter sp. (strain PRwf-1), this protein is Gamma-glutamyl phosphate reductase.